A 347-amino-acid chain; its full sequence is tRNA N6-adenosine threonylcarbamoyltransferase (347 aa).

Fe cation is bound by residues histidine 109 and histidine 113. Residues 136-140 (TVSGG), aspartate 169, glycine 182, aspartate 186, and asparagine 284 contribute to the substrate site. Aspartate 312 is a Fe cation binding site.

It belongs to the KAE1 / TsaD family. It depends on Fe(2+) as a cofactor.

It localises to the cytoplasm. The enzyme catalyses L-threonylcarbamoyladenylate + adenosine(37) in tRNA = N(6)-L-threonylcarbamoyladenosine(37) in tRNA + AMP + H(+). In terms of biological role, required for the formation of a threonylcarbamoyl group on adenosine at position 37 (t(6)A37) in tRNAs that read codons beginning with adenine. Is involved in the transfer of the threonylcarbamoyl moiety of threonylcarbamoyl-AMP (TC-AMP) to the N6 group of A37, together with TsaE and TsaB. TsaD likely plays a direct catalytic role in this reaction. In Chlorobium phaeobacteroides (strain BS1), this protein is tRNA N6-adenosine threonylcarbamoyltransferase.